Here is a 453-residue protein sequence, read N- to C-terminus: Tubulin alpha-13 chain (453 aa).

Residue Gln-11 participates in GTP binding. Lys-40 is modified (N6-acetyllysine). 7 residues coordinate GTP: Glu-71, Ser-140, Gly-144, Thr-145, Thr-179, Asn-206, and Asn-228. Mg(2+) is bound at residue Glu-71. Glu-254 is a catalytic residue. A disordered region spans residues 429 to 453 (EKDYEEVGTESQEGDGEEGEDGGDQ). A compositionally biased stretch (acidic residues) spans 431–453 (DYEEVGTESQEGDGEEGEDGGDQ).

This sequence belongs to the tubulin family. Dimer of alpha and beta chains. A typical microtubule is a hollow water-filled tube with an outer diameter of 25 nm and an inner diameter of 15 nM. Alpha-beta heterodimers associate head-to-tail to form protofilaments running lengthwise along the microtubule wall with the beta-tubulin subunit facing the microtubule plus end conferring a structural polarity. Microtubules usually have 13 protofilaments but different protofilament numbers can be found in some organisms and specialized cells. The cofactor is Mg(2+). Post-translationally, acetylation of alpha chains at Lys-40 stabilizes microtubules and affects affinity and processivity of microtubule motors. This modification has a role in multiple cellular functions, ranging from cell motility, cell cycle progression or cell differentiation to intracellular trafficking and signaling.

It localises to the cytoplasm. The protein resides in the cytoskeleton. It carries out the reaction GTP + H2O = GDP + phosphate + H(+). Functionally, tubulin is the major constituent of microtubules, a cylinder consisting of laterally associated linear protofilaments composed of alpha- and beta-tubulin heterodimers. Microtubules grow by the addition of GTP-tubulin dimers to the microtubule end, where a stabilizing cap forms. Below the cap, tubulin dimers are in GDP-bound state, owing to GTPase activity of alpha-tubulin. The polypeptide is Tubulin alpha-13 chain (TUBA13) (Naegleria pringsheimi (Amoeba)).